The primary structure comprises 209 residues: Pyridoxal phosphate homeostasis protein (209 aa).

An N6-(pyridoxal phosphate)lysine modification is found at Lys31.

This sequence belongs to the pyridoxal phosphate-binding protein YggS/PROSC family.

Pyridoxal 5'-phosphate (PLP)-binding protein, which is involved in PLP homeostasis. In Deinococcus radiodurans (strain ATCC 13939 / DSM 20539 / JCM 16871 / CCUG 27074 / LMG 4051 / NBRC 15346 / NCIMB 9279 / VKM B-1422 / R1), this protein is Pyridoxal phosphate homeostasis protein.